Consider the following 538-residue polypeptide: Phosphoenolpyruvate carboxykinase (ATP) (538 aa).

Substrate contacts are provided by R64, Y205, and K211. ATP-binding positions include K211, H230, and 246-254; that span reads GLSGTGKTT. Positions 211 and 230 each coordinate Mn(2+). Residue D267 coordinates Mn(2+). ATP is bound by residues E295, R331, 447-448, and T453; that span reads RI. R331 contributes to the substrate binding site.

It belongs to the phosphoenolpyruvate carboxykinase (ATP) family. Monomer. Mn(2+) is required as a cofactor.

Its subcellular location is the cytoplasm. The catalysed reaction is oxaloacetate + ATP = phosphoenolpyruvate + ADP + CO2. It participates in carbohydrate biosynthesis; gluconeogenesis. Its function is as follows. Involved in the gluconeogenesis. Catalyzes the conversion of oxaloacetate (OAA) to phosphoenolpyruvate (PEP) through direct phosphoryl transfer between the nucleoside triphosphate and OAA. This chain is Phosphoenolpyruvate carboxykinase (ATP), found in Baumannia cicadellinicola subsp. Homalodisca coagulata.